Here is a 369-residue protein sequence, read N- to C-terminus: D-alanine--D-alanine ligase (369 aa).

The region spanning 152–359 (KKLFAAEGLP…YPSLLATMVE (208 aa)) is the ATP-grasp domain. An ATP-binding site is contributed by 180–235 (RERLGLPVFVKPARGGSSIGVSRVSSWDELDAAVAAARDHDPKVIVEAAIAGRELE). Residues D314, E326, and N328 each coordinate Mg(2+).

Belongs to the D-alanine--D-alanine ligase family. Requires Mg(2+) as cofactor. It depends on Mn(2+) as a cofactor.

It localises to the cytoplasm. The enzyme catalyses 2 D-alanine + ATP = D-alanyl-D-alanine + ADP + phosphate + H(+). It participates in cell wall biogenesis; peptidoglycan biosynthesis. In terms of biological role, cell wall formation. In Mycobacterium avium (strain 104), this protein is D-alanine--D-alanine ligase.